The primary structure comprises 378 residues: UPF0754 membrane protein BCQ_0944 (378 aa).

Transmembrane regions (helical) follow at residues 1 to 21 (MNIWLSMLTTTGLGAIIGGFT) and 357 to 377 (YLGALLGGMIGIVQGLLLLFL).

Belongs to the UPF0754 family.

It localises to the cell membrane. The protein is UPF0754 membrane protein BCQ_0944 of Bacillus cereus (strain Q1).